The following is a 328-amino-acid chain: MIYQMQMPAKIEVDEATHTDQYGRFIAQPLERGYGVTLGNMMRRVLLASLPGTAITGIKVDGVFHEFSSIEGVREDVPEIVLNLKKVRFKSTCKRSCKTTLSIVGPKDFTAGDIVAQEGEFEVLNKDLYIATVNEGSTLNIDVYIGRGRGYTPAEESRPDSMPIGYIAIDAIYTPIRNVKFAVENTRVGQRTDYEKMVLDVETDGSITPDDSISLAGRIINEHVTFFANFSPTEEEFTEEEYKQQDDEFETMRRLLNTKIEDLDLSVRSHNCLRLAEIDTIGDLVSRKEDELLNYKNFGKKSLTELKEQLEKFELKFGMDITRYQMKG.

Positions 1 to 231 (MIYQMQMPAK…EHVTFFANFS (231 aa)) are alpha N-terminal domain (alpha-NTD). Residues 247–328 (DEFETMRRLL…MDITRYQMKG (82 aa)) form an alpha C-terminal domain (alpha-CTD) region.

The protein belongs to the RNA polymerase alpha chain family. As to quaternary structure, homodimer. The RNAP catalytic core consists of 2 alpha, 1 beta, 1 beta' and 1 omega subunit. When a sigma factor is associated with the core the holoenzyme is formed, which can initiate transcription.

The enzyme catalyses RNA(n) + a ribonucleoside 5'-triphosphate = RNA(n+1) + diphosphate. Its function is as follows. DNA-dependent RNA polymerase catalyzes the transcription of DNA into RNA using the four ribonucleoside triphosphates as substrates. The chain is DNA-directed RNA polymerase subunit alpha from Chlorobium luteolum (strain DSM 273 / BCRC 81028 / 2530) (Pelodictyon luteolum).